Reading from the N-terminus, the 123-residue chain is Ribonuclease P protein component (123 aa).

The protein belongs to the RnpA family. In terms of assembly, consists of a catalytic RNA component (M1 or rnpB) and a protein subunit.

It carries out the reaction Endonucleolytic cleavage of RNA, removing 5'-extranucleotides from tRNA precursor.. Functionally, RNaseP catalyzes the removal of the 5'-leader sequence from pre-tRNA to produce the mature 5'-terminus. It can also cleave other RNA substrates such as 4.5S RNA. The protein component plays an auxiliary but essential role in vivo by binding to the 5'-leader sequence and broadening the substrate specificity of the ribozyme. The polypeptide is Ribonuclease P protein component (Streptococcus pneumoniae (strain JJA)).